The chain runs to 955 residues: MLPGRLCWVPLLLALGVGSGSGGGGDSRQRRLLAAKVNKHKPWIETSYHGVITENNDTVILDPPLVALDKDAPVPFAGEICAFKIHGQELPFEAVVLNKTSGEGRLRAKSPIDCELQKEYTFIIQAYDCGAGPHETAWKKSHKAVVHIQVKDVNEFAPTFKEPAYKAVVTEGKIYDSILQVEAIDEDCSPQYSQICNYEIVTTDVPFAIDRNGNIRNTEKLSYDKQHQYEILVTAYDCGQKPAAQDTLVQVDVKPVCKPGWQDWTKRIEYQPGSGSMPLFPSIHLETCDGAVSSLQIVTELQTNYIGKGCDRETYSEKSLQKLCGASSGIIDLLPSPSAATNWTAGLLVDSSEMIFKFDGRQGAKVPDGIVPKNLTDQFTITMWMKHGPSPGVRAEKETILCNSDKTEMNRHHYALYVHNCRLVFLLRKDFDQADTFRPAEFHWKLDQICDKEWHYYVINVEFPVVTLYMDGATYEPYLVTNDWPIHPSHIAMQLTVGACWQGGEVTKPQFAQFFHGSLASLTIRPGKMESQKVISCLQACKEGLDINSLESLGQGIKYHFNPSQSILVMEGDDIGNINRALQKVSYINSRQFPTAGVRRLKVSSKVQCFGEDVCISIPEVDAYVMVLQAIEPRITLRGTDHFWRPAAQFESARGVTLFPDIKIVSTFAKTEAPGDVKTTDPKSEVLEEMLHNLDFCDILVIGGDLDPRQECLELNHSELHQRHLDATNSTAGYSIYGVGSMSRYEQVLHHIRYRNWRPASLEARRFRIKCSELNGRYTSNEFNLEVSILHEDQVSDKEHVNHLIVQPPFLQSVHHPESRSSIQHSSVVPSIATVVIIISVCMLVFVVAMGVYRVRIAHQHFIQETEAAKESEMDWDDSALTITVNPMEKHEGPGHGEDETEGEEEEEAEEEMSSSSGSDDSEEEEEEEGMGRGRHGQNGARQAQLEWDDSTLPY.

The N-terminal stretch at 1-20 is a signal peptide; that stretch reads MLPGRLCWVPLLLALGVGSG. The Extracellular portion of the chain corresponds to 21–831; the sequence is SGGGGDSRQR…SIQHSSVVPS (811 aa). Cadherin domains are found at residues 44 to 160 and 161 to 280; these read IETS…APTF and KEPA…MPLF. Asparagine 56 and asparagine 98 each carry an N-linked (GlcNAc...) asparagine glycan. Asparagine 342, asparagine 374, asparagine 716, and asparagine 729 each carry an N-linked (GlcNAc...) asparagine glycan. The chain crosses the membrane as a helical span at residues 832–852; that stretch reads IATVVIIISVCMLVFVVAMGV. Residues 853-955 lie on the Cytoplasmic side of the membrane; it reads YRVRIAHQHF…LEWDDSTLPY (103 aa). The tract at residues 887–955 is disordered; it reads PMEKHEGPGH…LEWDDSTLPY (69 aa). A compositionally biased stretch (basic and acidic residues) spans 888-898; the sequence is MEKHEGPGHGE. 2 stretches are compositionally biased toward acidic residues: residues 899-913 and 920-929; these read DETE…EEEM and DDSEEEEEEE.

The protein belongs to the calsyntenin family. Proteolytically processed under normal cellular conditions. A primary zeta-cleavage generates a large extracellular (soluble) N-terminal domain (sAlc) and a short C-terminal transmembrane fragment (CTF1). A secondary cleavage catalyzed by gamma-secretase within the transmembrane domain releases the beta-Alc-gamma chain in the extracellular milieu and produces an intracellular fragment (AlcICD). This processing is strongly suppressed in the tripartite complex formed with APBA2 and APP, which seems to prevent the association with PSEN1. Restricted to the brain.

The protein resides in the postsynaptic cell membrane. It localises to the endoplasmic reticulum membrane. Its subcellular location is the golgi apparatus membrane. It is found in the cell projection. The protein localises to the dendrite. Functionally, postsynaptic adhesion molecule that binds to presynaptic neurexins to mediate synapse formation, and which is involved in learning and memory. Promotes synapse development by acting as a cell adhesion molecule at the postsynaptic membrane, which associates with neurexin-alpha at the presynaptic membrane. In Homo sapiens (Human), this protein is Calsyntenin-2.